We begin with the raw amino-acid sequence, 453 residues long: Na(+)/H(+) antiporter NhaA 2 (453 aa).

The next 12 helical transmembrane spans lie at 23–43 (FLHI…AALI), 74–94 (LHFW…GMEI), 111–131 (LPMA…LSFG), 139–159 (GWAV…ALLG), 168–188 (VFLL…IAFF), 191–211 (GGLD…VIGL), 214–234 (IGVG…LGIL), 235–255 (LTGA…PVTA), 316–336 (VAFG…LSGV), 345–365 (WVMI…IVSV), 386–406 (IVLV…IANL), and 419–439 (LGVL…GVWS).

Belongs to the NhaA Na(+)/H(+) (TC 2.A.33) antiporter family.

Its subcellular location is the cell inner membrane. The enzyme catalyses Na(+)(in) + 2 H(+)(out) = Na(+)(out) + 2 H(+)(in). Functionally, na(+)/H(+) antiporter that extrudes sodium in exchange for external protons. This Pseudomonas putida (strain ATCC 700007 / DSM 6899 / JCM 31910 / BCRC 17059 / LMG 24140 / F1) protein is Na(+)/H(+) antiporter NhaA 2.